A 289-amino-acid chain; its full sequence is 4-hydroxy-tetrahydrodipicolinate synthase (289 aa).

Position 43 (T43) interacts with pyruvate. Y131 (proton donor/acceptor) is an active-site residue. K160 acts as the Schiff-base intermediate with substrate in catalysis. V200 is a binding site for pyruvate.

The protein belongs to the DapA family. Homotetramer; dimer of dimers.

It localises to the cytoplasm. The enzyme catalyses L-aspartate 4-semialdehyde + pyruvate = (2S,4S)-4-hydroxy-2,3,4,5-tetrahydrodipicolinate + H2O + H(+). It functions in the pathway amino-acid biosynthesis; L-lysine biosynthesis via DAP pathway; (S)-tetrahydrodipicolinate from L-aspartate: step 3/4. Catalyzes the condensation of (S)-aspartate-beta-semialdehyde [(S)-ASA] and pyruvate to 4-hydroxy-tetrahydrodipicolinate (HTPA). The sequence is that of 4-hydroxy-tetrahydrodipicolinate synthase from Methanococcus maripaludis (strain C6 / ATCC BAA-1332).